A 102-amino-acid polypeptide reads, in one-letter code: Iron-sulfur cluster assembly protein CyaY (102 aa).

The protein belongs to the frataxin family.

In terms of biological role, involved in iron-sulfur (Fe-S) cluster assembly. May act as a regulator of Fe-S biogenesis. The chain is Iron-sulfur cluster assembly protein CyaY from Actinobacillus succinogenes (strain ATCC 55618 / DSM 22257 / CCUG 43843 / 130Z).